We begin with the raw amino-acid sequence, 394 residues long: Magnesium transporter MRS2-2 (394 aa).

The tract at residues 115–145 (PVGNASHNGGQGDGKEIAGAQNDGDTGDEDE) is disordered. A run of 2 helical transmembrane segments spans residues 329–349 (LVLSSGTVCLSMYSLVAGIFG) and 366–386 (YVVGLTGTLCVVVFVIIMSYA). The short motif at 349–351 (GMN) is the Required for magnesium transport activity element.

The protein belongs to the CorA metal ion transporter (MIT) (TC 1.A.35.5) family. In terms of tissue distribution, expressed in the whole plant but preferentially in the mature anthers.

It localises to the membrane. Low-affinity magnesium transporter that mediates the influx of magnesium. Plays a crucial role in male gametophyte development and male fertility. This chain is Magnesium transporter MRS2-2 (MRS2-2), found in Arabidopsis thaliana (Mouse-ear cress).